A 571-amino-acid chain; its full sequence is Sulfite reductase [NADPH] hemoprotein beta-component (571 aa).

Residues Cys-435, Cys-441, Cys-480, and Cys-484 each coordinate [4Fe-4S] cluster. Cys-484 contacts siroheme.

Belongs to the nitrite and sulfite reductase 4Fe-4S domain family. As to quaternary structure, alpha(8)-beta(8). The alpha component is a flavoprotein, the beta component is a hemoprotein. Siroheme is required as a cofactor. [4Fe-4S] cluster serves as cofactor.

It catalyses the reaction hydrogen sulfide + 3 NADP(+) + 3 H2O = sulfite + 3 NADPH + 4 H(+). Its pathway is sulfur metabolism; hydrogen sulfide biosynthesis; hydrogen sulfide from sulfite (NADPH route): step 1/1. In terms of biological role, component of the sulfite reductase complex that catalyzes the 6-electron reduction of sulfite to sulfide. This is one of several activities required for the biosynthesis of L-cysteine from sulfate. This is Sulfite reductase [NADPH] hemoprotein beta-component from Serratia proteamaculans (strain 568).